Reading from the N-terminus, the 329-residue chain is Probable alpha-1,2-galactosyltransferase gmh1 (329 aa).

Residues 1 to 14 (MLSFFTKNTLTKRK) are Cytoplasmic-facing. The helical; Signal-anchor for type II membrane protein transmembrane segment at 15–35 (LIMLALAIVFTFFAFGLYFIP) threads the bilayer. Topologically, residues 36-329 (HDEISVFDFK…LWTKYKDKII (294 aa)) are lumenal. Residues Asn127 and Asn169 are each glycosylated (N-linked (GlcNAc...) asparagine).

Belongs to the glycosyltransferase 34 family.

The protein localises to the golgi apparatus membrane. This chain is Probable alpha-1,2-galactosyltransferase gmh1 (gmh1), found in Schizosaccharomyces pombe (strain 972 / ATCC 24843) (Fission yeast).